The primary structure comprises 500 residues: NAD(P)H-quinone oxidoreductase chain 4, chloroplastic (500 aa).

The next 14 membrane-spanning stretches (helical) occupy residues 4–24 (FPWL…IFFL), 37–57 (IGIC…FFQL), 87–107 (IGPI…AWPV), 113–130 (LFHF…GLFS), 134–154 (LLLF…LLSM), 167–187 (FILY…GMGL), 208–228 (ALEI…LPII), 242–262 (HYST…YGLI), 272–292 (AHSI…IYAA), 305–325 (IAYS…SITD), 330–350 (GAVL…FLAG), 386–406 (LALP…GIIT), 416–436 (VLIT…SLSM), and 462–482 (LFIS…PDFV).

Belongs to the complex I subunit 4 family.

It is found in the plastid. Its subcellular location is the chloroplast thylakoid membrane. It carries out the reaction a plastoquinone + NADH + (n+1) H(+)(in) = a plastoquinol + NAD(+) + n H(+)(out). The enzyme catalyses a plastoquinone + NADPH + (n+1) H(+)(in) = a plastoquinol + NADP(+) + n H(+)(out). The protein is NAD(P)H-quinone oxidoreductase chain 4, chloroplastic of Ceratophyllum demersum (Rigid hornwort).